We begin with the raw amino-acid sequence, 75 residues long: Sec-independent protein translocase protein TatA (75 aa).

Residues 1–21 (MGSFSIWHWLIVLVIIALVFG) form a helical membrane-spanning segment. The tract at residues 45-75 (DASADKPADQVTQQRVSDDTIDVQAKEKSNS) is disordered.

The protein belongs to the TatA/E family. In terms of assembly, the Tat system comprises two distinct complexes: a TatABC complex, containing multiple copies of TatA, TatB and TatC subunits, and a separate TatA complex, containing only TatA subunits. Substrates initially bind to the TatABC complex, which probably triggers association of the separate TatA complex to form the active translocon.

The protein resides in the cell inner membrane. In terms of biological role, part of the twin-arginine translocation (Tat) system that transports large folded proteins containing a characteristic twin-arginine motif in their signal peptide across membranes. TatA could form the protein-conducting channel of the Tat system. The polypeptide is Sec-independent protein translocase protein TatA (Bordetella bronchiseptica (strain ATCC BAA-588 / NCTC 13252 / RB50) (Alcaligenes bronchisepticus)).